We begin with the raw amino-acid sequence, 544 residues long: Homeobox protein B-H1 (544 aa).

Residues 53 to 70 (STTTMSSGGSTTTASGIG) are compositionally biased toward low complexity. 4 disordered regions span residues 53–73 (STTT…GKPN), 92–179 (YKQQ…PPTA), 236–308 (GGVG…AFTD), and 471–544 (AANP…QIQV). Residues 95-105 (QQHHQQLHHHN) are compositionally biased toward basic residues. The span at 106-131 (NNNNSGSSGGSSPAHSNNNNNINGDN) shows a compositional bias: low complexity. Positions 156 to 172 (THPHTHPHALMHPHGKL) are enriched in basic residues. Residues 247-262 (DLDDSSDYHEENEDCD) are compositionally biased toward acidic residues. Residues 266 to 282 (MDDHSVCSNGGKDDDGN) show a composition bias toward basic and acidic residues. Over residues 283–293 (SVKSGSTSDMS) the composition is skewed to polar residues. A DNA-binding region (homeobox) is located at residues 299–358 (QRKARTAFTDHQLQTLEKSFERQKYLSVQERQELAHKLDLSDCQVKTWYQNRRTKWKRQT). The span at 476–485 (GPHPVAPPPS) shows a compositional bias: pro residues. A compositionally biased stretch (low complexity) spans 492–506 (PSGLVKPIPAHSASA). A compositionally biased stretch (pro residues) spans 507–516 (SPPPRPPSTP).

It belongs to the Antp homeobox family. In terms of tissue distribution, B-H1 and B-H2 are abundant in the eye-antenna imaginal disk. Expressed in R1 and R6 cells throughout larval stage until 30 hours after puparium formation, at which time expression is seen in the anterior and posterior primary pigment cells. Coexpressed in embryonic glial cells, neurons of the CNS and PNS, most latitudinal anterior cells of the developing notum and the central circular region of the leg and antennal imaginal disk throughout larval development.

The protein resides in the nucleus. B-H1 and B-H2 are regulated by members of the wg signaling pathway; wg and dpp. B-H1 and B-H2 are coexpressed and functionally required in R1 and R6 receptor cells and primary pigment cells for normal eye development. Coexpression is also required for the fate determination of external sensory organs, formation of notal microchaetae, formation of presutural macrochaetae, antennal development and for distal leg morphogenesis; segmentation and specification of tarsal segments 3-5. This chain is Homeobox protein B-H1 (B-H1), found in Drosophila melanogaster (Fruit fly).